A 524-amino-acid polypeptide reads, in one-letter code: tRNA-2-methylthio-N(6)-dimethylallyladenosine synthase (524 aa).

Residues 1 to 12 (MNTHPSHPDHPA) are compositionally biased toward basic and acidic residues. A disordered region spans residues 1–23 (MNTHPSHPDHPADTLPARGNREG). In terms of domain architecture, MTTase N-terminal spans 27–143 (RTYEVRTFGC…LPTLLNRAEH (117 aa)). [4Fe-4S] cluster-binding residues include Cys36, Cys72, Cys106, Cys180, Cys184, and Cys187. The region spanning 166-402 (RESAYAGWVS…MALQERICEE (237 aa)) is the Radical SAM core domain. The 72-residue stretch at 405-476 (QKFIGQTVEL…PFFLIADAGV (72 aa)) folds into the TRAM domain.

It belongs to the methylthiotransferase family. MiaB subfamily. Monomer. [4Fe-4S] cluster serves as cofactor.

It is found in the cytoplasm. It carries out the reaction N(6)-dimethylallyladenosine(37) in tRNA + (sulfur carrier)-SH + AH2 + 2 S-adenosyl-L-methionine = 2-methylsulfanyl-N(6)-dimethylallyladenosine(37) in tRNA + (sulfur carrier)-H + 5'-deoxyadenosine + L-methionine + A + S-adenosyl-L-homocysteine + 2 H(+). Its function is as follows. Catalyzes the methylthiolation of N6-(dimethylallyl)adenosine (i(6)A), leading to the formation of 2-methylthio-N6-(dimethylallyl)adenosine (ms(2)i(6)A) at position 37 in tRNAs that read codons beginning with uridine. This chain is tRNA-2-methylthio-N(6)-dimethylallyladenosine synthase, found in Corynebacterium efficiens (strain DSM 44549 / YS-314 / AJ 12310 / JCM 11189 / NBRC 100395).